We begin with the raw amino-acid sequence, 976 residues long: Ephrin type-B receptor 4b (976 aa).

The first 23 residues, M1 to A23, serve as a signal peptide directing secretion. The Extracellular portion of the chain corresponds to E24–G541. Positions E25–R204 constitute an Eph LBD domain. 2 cysteine pairs are disulfide-bonded: C69/C186 and C103/C113. Fibronectin type-III domains follow at residues P326 to D434 and P438 to D529. The helical transmembrane segment at V542 to F562 threads the bilayer. Over R563–Y976 the chain is Cytoplasmic. A Protein kinase domain is found at V613 to L897. ATP-binding positions include I619–V627 and K645. D738 (proton acceptor) is an active-site residue. The region spanning S906 to H970 is the SAM domain.

This sequence belongs to the protein kinase superfamily. Tyr protein kinase family. Ephrin receptor subfamily.

The protein resides in the cell membrane. The enzyme catalyses L-tyrosyl-[protein] + ATP = O-phospho-L-tyrosyl-[protein] + ADP + H(+). In terms of biological role, receptor tyrosine kinase which binds promiscuously transmembrane ephrin-B family ligands residing on adjacent cells, leading to contact-dependent bidirectional signaling into neighboring cells. The signaling pathway downstream of the receptor is referred to as forward signaling while the signaling pathway downstream of the ephrin ligand is referred to as reverse signaling. Together with its cognate ligand/functional ligand EFNB2 is involved in the regulation of cell adhesion and cell migration, and plays a central role in heart morphogenesis, angiogenesis and blood vessel remodeling and permeability. EPHB4-mediated forward signaling controls cellular repulsion and segregation from EFNB2-expressing cells. Involved in somitogenesis. This chain is Ephrin type-B receptor 4b, found in Danio rerio (Zebrafish).